Reading from the N-terminus, the 361-residue chain is Chorismate synthase (361 aa).

2 residues coordinate NADP(+): R48 and R54. FMN is bound by residues 125–127 (RSS), 238–239 (NA), G278, 293–297 (KPTSS), and R319.

Belongs to the chorismate synthase family. In terms of assembly, homotetramer. FMNH2 serves as cofactor.

It catalyses the reaction 5-O-(1-carboxyvinyl)-3-phosphoshikimate = chorismate + phosphate. Its pathway is metabolic intermediate biosynthesis; chorismate biosynthesis; chorismate from D-erythrose 4-phosphate and phosphoenolpyruvate: step 7/7. Functionally, catalyzes the anti-1,4-elimination of the C-3 phosphate and the C-6 proR hydrogen from 5-enolpyruvylshikimate-3-phosphate (EPSP) to yield chorismate, which is the branch point compound that serves as the starting substrate for the three terminal pathways of aromatic amino acid biosynthesis. This reaction introduces a second double bond into the aromatic ring system. This chain is Chorismate synthase, found in Klebsiella pneumoniae (strain 342).